Consider the following 516-residue polypeptide: GMP synthase [glutamine-hydrolyzing] (516 aa).

One can recognise a Glutamine amidotransferase type-1 domain in the interval 6–199; sequence KVLILDFGSQ…LFEIAGLTSG (194 aa). The active-site Nucleophile is Cys83. Catalysis depends on residues His173 and Glu175. One can recognise a GMPS ATP-PPase domain in the interval 200–391; the sequence is WTMSSFLETE…LGMPDFIIWR (192 aa). 227–233 is an ATP binding site; it reads SGGVDST.

In terms of assembly, homodimer.

It carries out the reaction XMP + L-glutamine + ATP + H2O = GMP + L-glutamate + AMP + diphosphate + 2 H(+). It participates in purine metabolism; GMP biosynthesis; GMP from XMP (L-Gln route): step 1/1. Its function is as follows. Catalyzes the synthesis of GMP from XMP. The chain is GMP synthase [glutamine-hydrolyzing] from Solidesulfovibrio magneticus (strain ATCC 700980 / DSM 13731 / RS-1) (Desulfovibrio magneticus).